A 139-amino-acid polypeptide reads, in one-letter code: Large ribosomal subunit protein uL16 (139 aa).

The span at Met-1–Met-17 shows a compositional bias: basic residues. Positions Met-1–Gly-24 are disordered.

The protein belongs to the universal ribosomal protein uL16 family. In terms of assembly, part of the 50S ribosomal subunit.

In terms of biological role, binds 23S rRNA and is also seen to make contacts with the A and possibly P site tRNAs. This Chlorobium limicola (strain DSM 245 / NBRC 103803 / 6330) protein is Large ribosomal subunit protein uL16.